A 114-amino-acid chain; its full sequence is MNAASLVQRVAGISGALAVAAGAYGAHGFRRSEASDYQRELFDTANKYHFYHSLALLGAARCRKPALAGVILLTGMGCFCGPLYHQPLTNDPSFSKLAPIGGSLLIVGWAAMAL.

An N-terminal signal peptide occupies residues 1–25 (MNAASLVQRVAGISGALAVAAGAYG). Residues 26–64 (AHGFRRSEASDYQRELFDTANKYHFYHSLALLGAARCRK) lie on the Extracellular side of the membrane. Residues 65–85 (PALAGVILLTGMGCFCGPLYH) traverse the membrane as a helical segment. Residues 86-93 (QPLTNDPS) are Cytoplasmic-facing. Residues 94–114 (FSKLAPIGGSLLIVGWAAMAL) form a helical membrane-spanning segment.

Belongs to the TMEM256 family.

It localises to the membrane. This is Transmembrane protein 256 (tmem256) from Danio rerio (Zebrafish).